Here is a 536-residue protein sequence, read N- to C-terminus: Testis-specific expressed protein 55 (536 aa).

Residues 1-11 show a composition bias toward low complexity; that stretch reads MEEPPQEALAE. 2 disordered regions span residues 1–287 and 328–348; these read MEEP…PGTS and SNADQPPVDNAHYTESDQTDH. Positions 35 to 52 are enriched in basic and acidic residues; the sequence is QKNQAERKADNHTAHRIA. Polar residues-rich tracts occupy residues 62–85 and 105–136; these read QAESSIFSQATNGVAEQNGHSTPG and QVNQTPSEQTKGKASSQANNVQHEQSDGQVSG. Basic and acidic residues-rich tracts occupy residues 138 to 158 and 173 to 222; these read TEERTAEQTERRLPTQAERRT and RGSR…ERRP. Residues 226 to 242 show a composition bias toward low complexity; it reads IDSGSSVPSDQSPSVQI. The span at 243 to 255 shows a compositional bias: polar residues; sequence DSGSSVPSDQRPS. The segment covering 339–348 has biased composition (basic and acidic residues); the sequence is HYTESDQTDH.

As to expression, testis-specific.

It localises to the nucleus. Its subcellular location is the cell projection. The protein localises to the cilium. It is found in the flagellum. This chain is Testis-specific expressed protein 55, found in Homo sapiens (Human).